Reading from the N-terminus, the 882-residue chain is Alanine--tRNA ligase (882 aa).

Positions 570, 574, 672, and 676 each coordinate Zn(2+).

This sequence belongs to the class-II aminoacyl-tRNA synthetase family. Zn(2+) serves as cofactor.

Its subcellular location is the cytoplasm. The catalysed reaction is tRNA(Ala) + L-alanine + ATP = L-alanyl-tRNA(Ala) + AMP + diphosphate. In terms of biological role, catalyzes the attachment of alanine to tRNA(Ala) in a two-step reaction: alanine is first activated by ATP to form Ala-AMP and then transferred to the acceptor end of tRNA(Ala). Also edits incorrectly charged Ser-tRNA(Ala) and Gly-tRNA(Ala) via its editing domain. In Xanthomonas euvesicatoria pv. vesicatoria (strain 85-10) (Xanthomonas campestris pv. vesicatoria), this protein is Alanine--tRNA ligase.